The sequence spans 156 residues: Cyanate hydratase (156 aa).

Catalysis depends on residues arginine 96, glutamate 99, and serine 122.

This sequence belongs to the cyanase family.

The enzyme catalyses cyanate + hydrogencarbonate + 3 H(+) = NH4(+) + 2 CO2. Functionally, catalyzes the reaction of cyanate with bicarbonate to produce ammonia and carbon dioxide. This Burkholderia lata (strain ATCC 17760 / DSM 23089 / LMG 22485 / NCIMB 9086 / R18194 / 383) protein is Cyanate hydratase.